Consider the following 323-residue polypeptide: tRNA U34 carboxymethyltransferase (323 aa).

Carboxy-S-adenosyl-L-methionine-binding positions include lysine 91, tryptophan 105, lysine 110, glycine 130, 181-182, methionine 196, tyrosine 200, and arginine 315; that span reads IE.

The protein belongs to the class I-like SAM-binding methyltransferase superfamily. CmoB family. As to quaternary structure, homotetramer.

The enzyme catalyses carboxy-S-adenosyl-L-methionine + 5-hydroxyuridine(34) in tRNA = 5-carboxymethoxyuridine(34) in tRNA + S-adenosyl-L-homocysteine + H(+). Catalyzes carboxymethyl transfer from carboxy-S-adenosyl-L-methionine (Cx-SAM) to 5-hydroxyuridine (ho5U) to form 5-carboxymethoxyuridine (cmo5U) at position 34 in tRNAs. In Yersinia pestis bv. Antiqua (strain Antiqua), this protein is tRNA U34 carboxymethyltransferase.